The sequence spans 541 residues: Peptidyl-alpha-hydroxyglycine alpha-amidating lyase 1 (541 aa).

The N-terminal stretch at 1-33 (MKSTDSAKCLGSKSLAICCLLLHLLLCIRPAVS) is a signal peptide. Topologically, residues 34-458 (QTQSPQRYLH…VAVHHPSGKA (425 aa)) are extracellular. N-linked (GlcNAc...) asparagine glycosylation is present at N92. NHL repeat units lie at residues 164-205 (GKVQ…FPPR), 215-258 (LGDA…YSRK), and 272-314 (GISY…FLSS). 2 disulfides stabilise this stretch: C228/C248 and C299/C310. An N-linked (GlcNAc...) asparagine glycan is attached at N315. Residues 374-418 (KQLVSKFGPNNLQFQNPHDVAVTADGNEIYVAELNPMRIHKFVHR) form an NHL 4 repeat. The helical transmembrane segment at 459–479 (ILVASLMLLFAGSTFALALIF) threads the bilayer. Residues 480-541 (ARRRKRGCLP…TKTLASAQYA (62 aa)) are Cytoplasmic-facing. A disordered region spans residues 521 to 541 (LDQQASDEEQETKTLASAQYA).

The protein belongs to the peptidyl-alpha-hydroxyglycine alpha-amidating lyase family. The cofactor is Zn(2+). Post-translationally, N-glycosylated. In terms of tissue distribution, widely expressed. In mature larvae, it is ubiquitously expressed with a low expression in all cells and a stronger expression in a subset of neurons. Colocalizes with neuropeptide proctolin. In adults, weak expression is observed in most neuronal cell bodies and in scattered large cells throughout the protocerebrum and also in the subesophageal neuromeres (at protein level).

The protein localises to the cell membrane. It carries out the reaction a [peptide]-C-terminal (2S)-2-hydroxyglycine = a [peptide]-C-terminal amide + glyoxylate. Its function is as follows. Peptidyl-alpha-hydroxylglycine alpha-amidating lyase that catalyzes an essential reaction in C-terminal alpha-amidation of peptides. Mediates the dismutation of the unstable peptidyl(2-hydroxyglycine) intermediate to glyoxylate and the corresponding desglycine peptide amide. C-terminal amidation of peptides such as neuropeptides is essential for full biological activity. This is Peptidyl-alpha-hydroxyglycine alpha-amidating lyase 1 (Pal1) from Drosophila melanogaster (Fruit fly).